The primary structure comprises 229 residues: Cytidylate kinase (229 aa).

12 to 20 contributes to the ATP binding site; it reads GPSGSGKGT.

It belongs to the cytidylate kinase family. Type 1 subfamily.

The protein resides in the cytoplasm. The enzyme catalyses CMP + ATP = CDP + ADP. It carries out the reaction dCMP + ATP = dCDP + ADP. The protein is Cytidylate kinase of Azotobacter vinelandii (strain DJ / ATCC BAA-1303).